A 266-amino-acid chain; its full sequence is MAAGEISTPQEYISHHLHHLQVGTGFWSINVDSMFFSIALGILFLVIFHRVAKRATSGVPGKLQTAVELLIGFVDGTVRDMFHGKSKLIAPLALTIFVWVFLMNMMDLLPIDLLPQLWAGVYSLLGYDPAHAYLRAVPTADVNITLSMALGVFILVLFYSIKMKGLGGFVKELTMQPFNHPVFIPINLILEGVSLLSKPISLGLRLFGNMYAGELIFILIAGLLPWWSQWLLNVPWAIFHILIITLQAFIFMVLTVVYLSMASEEH.

Transmembrane regions (helical) follow at residues 28-48 (SINVDSMFFSIALGILFLVIF), 88-108 (LIAPLALTIFVWVFLMNMMDL), 141-161 (DVNITLSMALGVFILVLFYSI), 206-226 (LFGNMYAGELIFILIAGLLPW), and 237-257 (AIFHILIITLQAFIFMVLTVV).

Belongs to the ATPase A chain family. F-type ATPases have 2 components, CF(1) - the catalytic core - and CF(0) - the membrane proton channel. CF(1) has five subunits: alpha(3), beta(3), gamma(1), delta(1), epsilon(1). CF(0) has three main subunits: a(1), b(2) and c(9-12). The alpha and beta chains form an alternating ring which encloses part of the gamma chain. CF(1) is attached to CF(0) by a central stalk formed by the gamma and epsilon chains, while a peripheral stalk is formed by the delta and b chains.

Its subcellular location is the cell inner membrane. Functionally, key component of the proton channel; it plays a direct role in the translocation of protons across the membrane. The chain is ATP synthase subunit a from Pectobacterium atrosepticum (strain SCRI 1043 / ATCC BAA-672) (Erwinia carotovora subsp. atroseptica).